The following is a 751-amino-acid chain: Semaphorin-3C (751 aa).

Positions 1–21 (MAVLALHAVFGIFIYFSSVKG) are cleaved as a signal peptide. Residues 28–511 (RVFLTFNELQ…SEEGVTQVPL (484 aa)) enclose the Sema domain. An N-linked (GlcNAc...) asparagine glycan is attached at asparagine 81. An intrachain disulfide couples cysteine 101 to cysteine 112. Residue asparagine 123 is glycosylated (N-linked (GlcNAc...) asparagine). 3 disulfides stabilise this stretch: cysteine 130–cysteine 139, cysteine 266–cysteine 378, and cysteine 290–cysteine 338. Residue asparagine 268 is glycosylated (N-linked (GlcNAc...) asparagine). Asparagine 465 carries an N-linked (GlcNAc...) asparagine glycan. Residues cysteine 514 and cysteine 532 are joined by a disulfide bond. The Ig-like C2-type domain maps to 571 to 655 (AYRNAAETVQ…TENNFKQTLA (85 aa)). Residues asparagine 585 and asparagine 586 are each glycosylated (N-linked (GlcNAc...) asparagine). An intrachain disulfide couples cysteine 643 to cysteine 709. The segment covering 712–731 (SRQQGQRREEPQKMRGDYSK) has biased composition (basic and acidic residues). The disordered stretch occupies residues 712–751 (SRQQGQRREEPQKMRGDYSKLKALINSRKSRNRRNQLPAS).

It belongs to the semaphorin family. Collapsin-1, -2, -3, and -5 bind to overlapping but distinct axon tracts.

It is found in the secreted. In terms of biological role, induces the collapse and paralysis of neuronal growth cones. Could potentially act as repulsive cues toward specific neuronal populations. Binds to neuropilin. This Gallus gallus (Chicken) protein is Semaphorin-3C (SEMA3C).